The chain runs to 58 residues: Large ribosomal subunit protein uL30 (58 aa).

This sequence belongs to the universal ribosomal protein uL30 family. Part of the 50S ribosomal subunit.

This is Large ribosomal subunit protein uL30 from Parabacteroides distasonis (strain ATCC 8503 / DSM 20701 / CIP 104284 / JCM 5825 / NCTC 11152).